Reading from the N-terminus, the 46-residue chain is Elongation factor Tu (46 aa).

Residues 1-10 (MAKGKFERSK) show a composition bias toward basic and acidic residues. The segment at 1–20 (MAKGKFERSKPHVNVGTIGH) is disordered. Position 19–26 (19–26 (GHVDHGKT)) interacts with GTP.

Belongs to the GTP-binding elongation factor family. EF-Tu/EF-1A subfamily. As to quaternary structure, monomer.

Its subcellular location is the cytoplasm. Functionally, this protein promotes the GTP-dependent binding of aminoacyl-tRNA to the A-site of ribosomes during protein biosynthesis. This Eikenella corrodens protein is Elongation factor Tu (tufA).